Reading from the N-terminus, the 224-residue chain is Endonuclease NucS (224 aa).

Belongs to the NucS endonuclease family.

The protein localises to the cytoplasm. Functionally, cleaves both 3' and 5' ssDNA extremities of branched DNA structures. This is Endonuclease NucS from Mycolicibacterium smegmatis (strain ATCC 700084 / mc(2)155) (Mycobacterium smegmatis).